A 54-amino-acid polypeptide reads, in one-letter code: Light-harvesting protein B-800/850 alpha chain (54 aa).

At 1–14 the chain is on the cytoplasmic side; that stretch reads MTNGKIWLVVKPTV. Residues 15–35 traverse the membrane as a helical segment; the sequence is GVPLFLSAAVIASVVIHAAVL. H31 is an a bacteriochlorophyll binding site. The Periplasmic portion of the chain corresponds to 36–54; that stretch reads TTTTWLPAYYQGSAAVAAE.

Belongs to the antenna complex alpha subunit family. As to quaternary structure, the core complex is formed by different alpha and beta chains, binding bacteriochlorophyll molecules, and arranged most probably in tetrameric structures disposed around the reaction center. The non-pigmented gamma chains may constitute additional components.

It is found in the cell inner membrane. Functionally, antenna complexes are light-harvesting systems, which transfer the excitation energy to the reaction centers. The chain is Light-harvesting protein B-800/850 alpha chain (pucA) from Cereibacter sphaeroides (Rhodobacter sphaeroides).